Reading from the N-terminus, the 1187-residue chain is ATP-dependent DNA helicase MER3 (1187 aa).

A disordered region spans residues 1–41; the sequence is MKTKFDRLGTGKRSRPSPNNIDFNDQSATFKRNKKNSRQPS. Residues 16–30 show a composition bias toward polar residues; it reads PSPNNIDFNDQSATF. The Helicase ATP-binding domain occupies 148–322; sequence PSIYESNENC…WLKTNNELPA (175 aa). An ATP-binding site is contributed by 161-168; that stretch reads SPTGSGKT. The DEIH box motif lies at 268–271; that stretch reads DEIH. Positions 360 to 542 constitute a Helicase C-terminal domain; sequence KLIEIIEKHA…NLIEHLAAET (183 aa). In terms of domain architecture, SEC63 spans 616–922; the sequence is STAYGNAMTR…PKLEKIEFSI (307 aa). The segment at 1039-1054 adopts a C4-type zinc-finger fold; sequence CFHSCKDKTQCRHLCC. Residues 1146 to 1187 are disordered; the sequence is NCPEIIPIDLESSDSYSSNTAASSISDPNGDLDFLGSDIEFE. A compositionally biased stretch (low complexity) spans 1158–1171; the sequence is SDSYSSNTAASSIS.

Belongs to the helicase family. SKI2 subfamily. Oligomerizes. The cofactor is a divalent metal cation. Zn(2+) is required as a cofactor.

The protein resides in the nucleus. The enzyme catalyses Couples ATP hydrolysis with the unwinding of duplex DNA by translocating in the 3'-5' direction.. The catalysed reaction is ATP + H2O = ADP + phosphate + H(+). Its function is as follows. DNA-dependent ATPase and 3'-5' DNA helicase. Required in the control of double strand break transition and crossover during meiosis. ATPase is slightly better stimulated by single-stranded (ss) than double-stranded (ds)DNA. Unwinds Holliday junction (HJ) DNA to Y-DNA and to ssDNA. Efficient unwinding requires 6 nucleotides of 3'-ssDNA; seems to initiate unwinding from blunt ends when they open slightly. Binds HJ, dsDNA, ssDNA and 3'- and 5-overhang DNA. The sequence is that of ATP-dependent DNA helicase MER3 from Saccharomyces cerevisiae (strain ATCC 204508 / S288c) (Baker's yeast).